A 172-amino-acid chain; its full sequence is Diphosphoinositol polyphosphate phosphohydrolase 1 (172 aa).

The residue at position 1 (Met-1) is an N-acetylmethionine. Residues Arg-10, 18–20, and 39–41 each bind substrate; these read KKR and SSR. The Nudix hydrolase domain occupies 17–144; the sequence is YKKRAACLCF…VQASYFETLR (128 aa). Mg(2+) contacts are provided by Gly-50 and Glu-66. The short motif at 51-72 is the Nudix box element; that stretch reads GGMEPEEEPGTAAVREVCEEAG. Glu-69 serves as the catalytic Proton acceptor. Glu-70 lines the Mg(2+) pocket. Substrate contacts are provided by residues 89-91, Arg-115, and Lys-133; that span reads RKH.

Belongs to the Nudix hydrolase family. DIPP subfamily. In terms of assembly, monomer. Mg(2+) is required as a cofactor. Mn(2+) serves as cofactor. Requires Zn(2+) as cofactor.

The protein resides in the cytoplasm. Its subcellular location is the nucleus. The enzyme catalyses diphospho-myo-inositol polyphosphate + H2O = myo-inositol polyphosphate + phosphate.. It carries out the reaction 5-diphospho-1D-myo-inositol 1,2,3,4,6-pentakisphosphate + H2O = 1D-myo-inositol hexakisphosphate + phosphate + H(+). It catalyses the reaction 3,5-bis(diphospho)-1D-myo-inositol 1,2,4,6-tetrakisphosphate + H2O = 3-diphospho-1D-myo-inositol 1,2,4,5,6-pentakisphosphate + phosphate + 2 H(+). The catalysed reaction is [phosphate](n+1) + n H2O = (n+1) phosphate + n H(+). The enzyme catalyses P(1),P(5)-bis(5'-adenosyl) pentaphosphate + H2O = ADP + ATP + 2 H(+). It carries out the reaction P(1),P(6)-bis(5'-adenosyl) hexaphosphate + H2O = 2 ATP + 2 H(+). It catalyses the reaction P(1),P(4)-bis(5'-adenosyl) tetraphosphate + H2O = AMP + ATP + 2 H(+). The catalysed reaction is a 5'-end (N(7)-methyl 5'-triphosphoguanosine)-ribonucleoside in mRNA + H2O = N(7)-methyl-GMP + a 5'-end diphospho-ribonucleoside in mRNA + 2 H(+). The enzyme catalyses a 5'-end (N(7)-methyl 5'-triphosphoguanosine)-ribonucleoside in mRNA + H2O = N(7)-methyl-GDP + a 5'-end phospho-ribonucleoside in mRNA + 2 H(+). In terms of biological role, cleaves a beta-phosphate from the diphosphate groups in PP-InsP5 (diphosphoinositol pentakisphosphate) and [PP]2-InsP4 (bisdiphosphoinositol tetrakisphosphate), suggesting that it may play a role in signal transduction. InsP6 (inositol hexakisphosphate) is not a substrate. Also able to catalyze the hydrolysis of dinucleoside oligophosphates, with diadenosine 5',5'''-P1,P6-hexaphosphate (Ap6A) and diadenosine 5',5'''- P1,P5-pentaphosphate (Ap5A) being the preferred substrates. The major reaction products are ADP and p4a from Ap6A and ADP and ATP from Ap5A. Also able to hydrolyze 5- phosphoribose 1-diphosphate. Acts as a decapping enzyme that can hydrolyze both monomethylated and unmethylated capped RNAs. Hydrolyzes monomethylated capped RNA after both the alpha- and beta-phosphates generating m7GMP + ppRNA and m7GDP + pRNA. Modulates the stability of a subset of mRNAs implicated in cell motility. Divalent cations zinc, magnesium and manganese determine its substrate specificity. Exhibits diphosphoinositol polyphosphate phosphohydrolase in the presence of magnesium ions, diadenosine hexaphosphate hydrolase activity in the presence of manganese ions and endopolyphosphatase activity in the presence of zinc ions. Plays an important role in limiting DNA damage and maintaining cell survival upon oxidative stress via its endopolyphosphatase activity. This is Diphosphoinositol polyphosphate phosphohydrolase 1 from Bos taurus (Bovine).